We begin with the raw amino-acid sequence, 353 residues long: DNA polymerase IV (353 aa).

Positions 6-187 (IIHIDCDCFY…LPVTKLHGVG (182 aa)) constitute a UmuC domain. Residues Asp10 and Asp105 each coordinate Mg(2+). Glu106 is a catalytic residue.

The protein belongs to the DNA polymerase type-Y family. In terms of assembly, monomer. Mg(2+) is required as a cofactor.

Its subcellular location is the cytoplasm. The enzyme catalyses DNA(n) + a 2'-deoxyribonucleoside 5'-triphosphate = DNA(n+1) + diphosphate. In terms of biological role, poorly processive, error-prone DNA polymerase involved in untargeted mutagenesis. Copies undamaged DNA at stalled replication forks, which arise in vivo from mismatched or misaligned primer ends. These misaligned primers can be extended by PolIV. Exhibits no 3'-5' exonuclease (proofreading) activity. May be involved in translesional synthesis, in conjunction with the beta clamp from PolIII. This Pseudomonas syringae pv. tomato (strain ATCC BAA-871 / DC3000) protein is DNA polymerase IV.